The sequence spans 437 residues: Double-stranded RNA-binding protein 3 (437 aa).

The disordered stretch occupies residues 1–22 (MKKKSAPTPLPPETANTSPAPI). 2 DRBM domains span residues 35 to 104 (VFKS…EIVK) and 120 to 187 (LCKN…AIQG). 2 stretches are compositionally biased toward basic and acidic residues: residues 288–310 (AKRVEDEPPRDIEMVQPDKENQH) and 320–330 (DEARVEQEPSR). Residues 288 to 331 (AKRVEDEPPRDIEMVQPDKENQHSDAALVQPDDEARVEQEPSRD) form a disordered region.

Its function is as follows. Binds double-stranded RNA. This chain is Double-stranded RNA-binding protein 3 (DRB3), found in Oryza sativa subsp. japonica (Rice).